The following is a 443-amino-acid chain: Endoplasmic reticulum protein SC65 (443 aa).

The signal sequence occupies residues 1–18 (MARAAWGLLWLLLGSAGA). The tract at residues 81–102 (SGPATSQPRPAPGPDGDNEGDG) is disordered. Residue asparagine 367 is glycosylated (N-linked (GlcNAc...) asparagine). Composition is skewed to acidic residues over residues 387-398 (DEMELEETESLP), 407-419 (AEFE…EEGL), and 431-443 (GDED…PELA). The disordered stretch occupies residues 387-443 (DEMELEETESLPEPEKPLSDAEFEGEGDYEEGLYADWWQEPDAKGDEDEAEPEPELA).

The protein belongs to the leprecan family. Interacts with PLOD1, P3H3 and PPIB. Identified in a complex with PLOD1 and P3H3. As to expression, found in testis, brain, heart and at a much lower level in liver.

The protein resides in the endoplasmic reticulum. Its function is as follows. Part of a complex composed of PLOD1, P3H3 and P3H4 that catalyzes hydroxylation of lysine residues in collagen alpha chains and is required for normal assembly and cross-linking of collagen fibrils. Required for normal bone density and normal skin stability via its role in hydroxylation of lysine residues in collagen alpha chains and in collagen fibril assembly. This is Endoplasmic reticulum protein SC65 from Rattus norvegicus (Rat).